We begin with the raw amino-acid sequence, 259 residues long: Imidazole glycerol phosphate synthase subunit HisF (259 aa).

Residues D11 and D130 contribute to the active site.

This sequence belongs to the HisA/HisF family. In terms of assembly, heterodimer of HisH and HisF.

The protein resides in the cytoplasm. It catalyses the reaction 5-[(5-phospho-1-deoxy-D-ribulos-1-ylimino)methylamino]-1-(5-phospho-beta-D-ribosyl)imidazole-4-carboxamide + L-glutamine = D-erythro-1-(imidazol-4-yl)glycerol 3-phosphate + 5-amino-1-(5-phospho-beta-D-ribosyl)imidazole-4-carboxamide + L-glutamate + H(+). It participates in amino-acid biosynthesis; L-histidine biosynthesis; L-histidine from 5-phospho-alpha-D-ribose 1-diphosphate: step 5/9. In terms of biological role, IGPS catalyzes the conversion of PRFAR and glutamine to IGP, AICAR and glutamate. The HisF subunit catalyzes the cyclization activity that produces IGP and AICAR from PRFAR using the ammonia provided by the HisH subunit. The protein is Imidazole glycerol phosphate synthase subunit HisF of Lactococcus lactis subsp. cremoris (strain MG1363).